A 301-amino-acid chain; its full sequence is Cuticle collagen 2 (301 aa).

The first 37 residues, 1-37 (MDIDARIKAYKFVAYSAVTFSVVAVVSVFITLPMVYN), serve as a signal peptide directing secretion. 4 triple-helical region regions span residues 105–134 (GPPG…PGKG), 153–176 (GPPG…PGSP), 183–212 (GPAG…PGAS), and 215–282 (GGPG…KGIC). The tract at residues 109 to 284 (PGGSPGKPGK…GEGEKGICPK (176 aa)) is disordered. 2 stretches are compositionally biased toward pro residues: residues 143-170 (TQPP…PGPD) and 179-191 (PSGP…PGPA). A compositionally biased stretch (gly residues) spans 201 to 218 (GAPGGPGEPGASEQGGPG). A compositionally biased stretch (pro residues) spans 219–229 (EPGPAGPPGPA). Positions 252-261 (PGAAGAPGAD) are enriched in low complexity. Residues 262–274 (GNPGGPGTAGKPG) are compositionally biased toward gly residues.

The protein belongs to the cuticular collagen family. As to quaternary structure, collagen polypeptide chains are complexed within the cuticle by disulfide bonds and other types of covalent cross-links. As to expression, syncytial dorsal and ventral epidermis.

In terms of biological role, nematode cuticles are composed largely of collagen-like proteins. The cuticle functions both as an exoskeleton and as a barrier to protect the worm from its environment. In Caenorhabditis elegans, this protein is Cuticle collagen 2 (col-2).